We begin with the raw amino-acid sequence, 254 residues long: Ribosomal RNA small subunit methyltransferase G (254 aa).

Residues glycine 84, phenylalanine 89, 136–137 (VE), and arginine 155 contribute to the S-adenosyl-L-methionine site. The interval 231 to 254 (HLYPRAVGIPSKQPLGIQADDNRS) is disordered.

The protein belongs to the methyltransferase superfamily. RNA methyltransferase RsmG family.

It localises to the cytoplasm. In terms of biological role, specifically methylates the N7 position of a guanine in 16S rRNA. The sequence is that of Ribosomal RNA small subunit methyltransferase G from Synechococcus sp. (strain WH7803).